A 298-amino-acid polypeptide reads, in one-letter code: GSKCPFSDDTVAMVIVTRENRNRDFYTLQTLRNHDEFKKKAITRPVVFITHGFTSSATVESFVDLQTAILEXXXXKVTVSDWRVAACNRTTGLLYYVTAVSNTRLVGRYIATVTKKLVTDYNVSMADIRLIGHSLGAHVSGFAGKEVQKLKLEKYSEIIGLDPAGPSFESNDCAERLCKTDAHYVQIIHTSKKFGIEKSIGHVDFYVNQGNNQPGCGIIPLKDVCSHSRAITYMTECIKRECCLIGIPQSKSSKSISSCTRQECVCVGLKAKSYPNTGSFYVPVESTAPFCNNKGKII.

Cysteine 4 and cysteine 87 are oxidised to a cystine. N-linked (GlcNAc...) asparagine glycans are attached at residues asparagine 88 and asparagine 122. Catalysis depends on serine 134, which acts as the Nucleophile. The active-site Charge relay system is the aspartate 162. 2 disulfides stabilise this stretch: cysteine 173/cysteine 178 and cysteine 216/cysteine 225. Catalysis depends on histidine 227, which acts as the Charge relay system. 3 cysteine pairs are disulfide-bonded: cysteine 242-cysteine 266, cysteine 243-cysteine 291, and cysteine 259-cysteine 264.

It belongs to the AB hydrolase superfamily. Lipase family. In terms of tissue distribution, expressed by the venom gland.

Its subcellular location is the secreted. The enzyme catalyses a 1,2-diacyl-sn-glycero-3-phosphocholine + H2O = a 2-acyl-sn-glycero-3-phosphocholine + a fatty acid + H(+). Its function is as follows. Catalyzes the hydrolysis of phosphatidylcholine with phospholipase A1 activity. May act as an allergen and induce hemolytic activity. The sequence is that of Phospholipase A1 from Vespula squamosa (Southern yellow jacket).